Here is a 75-residue protein sequence, read N- to C-terminus: Microcin H47 (75 aa).

Positions 1–15 are excised as a propeptide; that stretch reads MREITESQLRYISGA. A helical transmembrane segment spans residues 30–50; it reads AIVGALAGIPGGPLGVVVGAV.

The protein localises to the secreted. It is found in the host cell membrane. In terms of biological role, bactericidal antibiotic. Active on bacteria phylogenetically related to the producing strain. The polypeptide is Microcin H47 (mchB) (Escherichia coli O6:H1 (strain CFT073 / ATCC 700928 / UPEC)).